Here is a 196-residue protein sequence, read N- to C-terminus: MTQRIIGLTGGIATGKTTVANYLASAHNLPIFDADIYARDAVSLGSPILDAIARRYGKEILLPDGSLNRPKLGEMIFQNQDQRHWVESLIHPYVRDRFLKAIAESTSPILVLVIPLLIEVQMTNLVTEIWVVICSESQQLQRLMERNHLTLEQAQARINSQLSLKEKAAIADVVLDNSSSLDALLKQVDIALNFEL.

The DPCK domain occupies 5 to 196 (IIGLTGGIAT…QVDIALNFEL (192 aa)). 13-18 (ATGKTT) serves as a coordination point for ATP.

This sequence belongs to the CoaE family.

Its subcellular location is the cytoplasm. The catalysed reaction is 3'-dephospho-CoA + ATP = ADP + CoA + H(+). It functions in the pathway cofactor biosynthesis; coenzyme A biosynthesis; CoA from (R)-pantothenate: step 5/5. Its function is as follows. Catalyzes the phosphorylation of the 3'-hydroxyl group of dephosphocoenzyme A to form coenzyme A. This chain is Dephospho-CoA kinase, found in Nostoc sp. (strain PCC 7120 / SAG 25.82 / UTEX 2576).